Here is a 970-residue protein sequence, read N- to C-terminus: Vacuolar membrane protease (970 aa).

The segment covering 1 to 12 (MTTADSNSSATR) has biased composition (polar residues). The disordered stretch occupies residues 1–35 (MTTADSNSSATRGSHEMADGSNRVPNDEPYHRKSP). The Cytoplasmic portion of the chain corresponds to 1 to 56 (MTTADSNSSATRGSHEMADGSNRVPNDEPYHRKSPESCENANFFVRAMRASFGYRK). A compositionally biased stretch (basic and acidic residues) spans 25–35 (PNDEPYHRKSP). A helical membrane pass occupies residues 57–77 (TSLTILVFLSVIATVLLSYYD). Over 78 to 397 (SSLEFSVSLP…FVVPMTFVFG (320 aa)) the chain is Vacuolar. Asn-146 and Asn-173 each carry an N-linked (GlcNAc...) asparagine glycan. Zn(2+)-binding residues include His-187 and Asp-199. The Proton acceptor role is filled by Glu-234. Zn(2+) contacts are provided by Glu-235, Glu-260, and His-333. The chain crosses the membrane as a helical span at residues 398–418 (VNVLLMVLVPLVSLISLALIF). Topologically, residues 419–423 (AHRKW) are cytoplasmic. A helical membrane pass occupies residues 424–444 (SVSLVTFFKFPLSFILSIFLL). Residues 445–465 (DNFSSWFVVSVNNFLPNSSAG) are Vacuolar-facing. Residues Asn-446 and Asn-461 are each glycosylated (N-linked (GlcNAc...) asparagine). Residues 466-486 (IIALTYFSFFVLANYLLLNGI) traverse the membrane as a helical segment. Over 487–502 (NLLFWKFKGTRHDEKL) the chain is Cytoplasmic. Residues 503 to 523 (VVILQISFMFWVSLIWSTANI) form a helical membrane-spanning segment. The Vacuolar segment spans residues 524 to 535 (AKSQFNGEHSGE). The helical transmembrane segment at 536-556 (FLLTLLYILQAAGGVFGLLCW) threads the bilayer. Residues 557 to 620 (LFKRSRTVHT…PTKHYSYDWS (64 aa)) are Cytoplasmic-facing. A helical transmembrane segment spans residues 621-641 (IQFLFIVPISSFLSYNYGWLI). Residues 642–658 (LEGLKKTLQESATSEYL) lie on the Vacuolar side of the membrane. Residues 659–679 (VFRALKLLAVVVAVPYLPFIF) traverse the membrane as a helical segment. Residues 680–683 (KVNR) are Cytoplasmic-facing. The helical transmembrane segment at 684–704 (IVFLVTIFLFVYGLGAIVISE) threads the bilayer. Residues 705 to 970 (PFTEANPLKL…LVNVKKSVLV (266 aa)) are Vacuolar-facing. N-linked (GlcNAc...) asparagine glycosylation is found at Asn-738, Asn-797, and Asn-877.

It belongs to the peptidase M28 family. Requires Zn(2+) as cofactor.

It is found in the vacuole membrane. May be involved in vacuolar sorting and osmoregulation. In Meyerozyma guilliermondii (strain ATCC 6260 / CBS 566 / DSM 6381 / JCM 1539 / NBRC 10279 / NRRL Y-324) (Yeast), this protein is Vacuolar membrane protease.